The primary structure comprises 565 residues: Membrane protein insertase YidC (565 aa).

6 consecutive transmembrane segments (helical) span residues 6–26 (VLLIFSWLTVATLLWMDWSKN), 348–368 (LMALIGQGLFWILSHLNSLLH), 370–390 (WGWAIVGLVVLLRIAMYPLSA), 437–457 (GGCFPILIQMPIFFALYWVLV), 479–499 (PYFILPLLNIVIMWATQKLTP), and 516–536 (PLIFGVMMAFVPSGLALYWVI).

It belongs to the OXA1/ALB3/YidC family. Type 1 subfamily. Interacts with the Sec translocase complex via SecD. Specifically interacts with transmembrane segments of nascent integral membrane proteins during membrane integration.

The protein resides in the cell inner membrane. In terms of biological role, required for the insertion and/or proper folding and/or complex formation of integral membrane proteins into the membrane. Involved in integration of membrane proteins that insert both dependently and independently of the Sec translocase complex, as well as at least some lipoproteins. Aids folding of multispanning membrane proteins. This is Membrane protein insertase YidC from Xylella fastidiosa (strain M23).